Reading from the N-terminus, the 856-residue chain is Valine--tRNA ligase (856 aa).

The short motif at 47 to 57 is the 'HIGH' region element; sequence PTASGVLHIGH. The 'KMSKS' region signature appears at 578 to 582; that stretch reads KMSKS. Lys581 serves as a coordination point for ATP.

It belongs to the class-I aminoacyl-tRNA synthetase family. ValS type 2 subfamily. In terms of assembly, monomer.

The protein resides in the cytoplasm. The enzyme catalyses tRNA(Val) + L-valine + ATP = L-valyl-tRNA(Val) + AMP + diphosphate. Functionally, catalyzes the attachment of valine to tRNA(Val). As ValRS can inadvertently accommodate and process structurally similar amino acids such as threonine, to avoid such errors, it has a 'posttransfer' editing activity that hydrolyzes mischarged Thr-tRNA(Val) in a tRNA-dependent manner. In Tropheryma whipplei (strain Twist) (Whipple's bacillus), this protein is Valine--tRNA ligase.